The chain runs to 646 residues: Serine/threonine-protein kinase PLK3 (646 aa).

Residues 1–35 (MEPAAGFLSPRPFQRAAAAPAPPAGPGPPPSALRG) are disordered. The span at 10 to 19 (PRPFQRAAAA) shows a compositional bias: low complexity. A compositionally biased stretch (pro residues) spans 20-31 (PAPPAGPGPPPS). Residues 62–314 (YLKGRLLGKG…IDQILRHDFF (253 aa)) enclose the Protein kinase domain. ATP is bound by residues 68–76 (LGKGGFARC) and Lys91. Catalysis depends on Asp185, which acts as the Proton acceptor. The disordered stretch occupies residues 381-417 (GHQDARPEAPAASGPAPVSLVETAPEDSSPRGTLASS). 2 consecutive POLO box domains span residues 463–541 (WVSK…YMEQ) and 562–645 (LLLQ…DRSP).

The protein belongs to the protein kinase superfamily. Ser/Thr protein kinase family. CDC5/Polo subfamily. In terms of assembly, interacts (via the POLO-box domain) with CIB1; leading to inhibit PLK3 kinase activity. Interacts with GOLGB1. In terms of processing, phosphorylated in an ATM-dependent manner following DNA damage. Phosphorylated as cells enter mitosis and dephosphorylated as cells exit mitosis. Transcripts are highly detected in placenta, lung, followed by skeletal muscle, heart, pancreas, ovaries and kidney and weakly detected in liver and brain. May have a short half-live. In cells of hematopoietic origin, strongly and exclusively detected in terminally differentiated macrophages. Transcript expression appears to be down-regulated in primary lung tumor.

Its subcellular location is the cytoplasm. It is found in the nucleus. It localises to the nucleolus. The protein localises to the golgi apparatus. The protein resides in the cytoskeleton. Its subcellular location is the microtubule organizing center. It is found in the centrosome. The catalysed reaction is L-seryl-[protein] + ATP = O-phospho-L-seryl-[protein] + ADP + H(+). The enzyme catalyses L-threonyl-[protein] + ATP = O-phospho-L-threonyl-[protein] + ADP + H(+). Serine/threonine-protein kinase involved in cell cycle regulation, response to stress and Golgi disassembly. Polo-like kinases act by binding and phosphorylating proteins that are already phosphorylated on a specific motif recognized by the POLO box domains. Phosphorylates ATF2, BCL2L1, CDC25A, CDC25C, CHEK2, HIF1A, JUN, p53/TP53, p73/TP73, PTEN, TOP2A and VRK1. Involved in cell cycle regulation: required for entry into S phase and cytokinesis. Phosphorylates BCL2L1, leading to regulate the G2 checkpoint and progression to cytokinesis during mitosis. Plays a key role in response to stress: rapidly activated upon stress stimulation, such as ionizing radiation, reactive oxygen species (ROS), hyperosmotic stress, UV irradiation and hypoxia. Involved in DNA damage response and G1/S transition checkpoint by phosphorylating CDC25A, p53/TP53 and p73/TP73. Phosphorylates p53/TP53 in response to reactive oxygen species (ROS), thereby promoting p53/TP53-mediated apoptosis. Phosphorylates CHEK2 in response to DNA damage, promoting the G2/M transition checkpoint. Phosphorylates the transcription factor p73/TP73 in response to DNA damage, leading to inhibit p73/TP73-mediated transcriptional activation and pro-apoptotic functions. Phosphorylates HIF1A and JUN is response to hypoxia. Phosphorylates ATF2 following hyperosmotic stress in corneal epithelium. Also involved in Golgi disassembly during the cell cycle: part of a MEK1/MAP2K1-dependent pathway that induces Golgi fragmentation during mitosis by mediating phosphorylation of VRK1. May participate in endomitotic cell cycle, a form of mitosis in which both karyokinesis and cytokinesis are interrupted and is a hallmark of megakaryocyte differentiation, via its interaction with CIB1. The sequence is that of Serine/threonine-protein kinase PLK3 (PLK3) from Homo sapiens (Human).